A 153-amino-acid polypeptide reads, in one-letter code: Small ribosomal subunit protein bS6 (153 aa).

Residues 94–153 are disordered; the sequence is EAHEEGPSAMMQKRDRDDRPRRDGDRPDRGPREDRGPRPPREGGFGDREDRPRRPREDRA.

Belongs to the bacterial ribosomal protein bS6 family.

Binds together with bS18 to 16S ribosomal RNA. The sequence is that of Small ribosomal subunit protein bS6 from Agrobacterium fabrum (strain C58 / ATCC 33970) (Agrobacterium tumefaciens (strain C58)).